We begin with the raw amino-acid sequence, 220 residues long: 3-dehydroquinate dehydratase (220 aa).

3-dehydroquinate-binding positions include serine 8, 30–32, and arginine 63; that span reads ELR. The active-site Proton donor/acceptor is histidine 114. Lysine 140 serves as the catalytic Schiff-base intermediate with substrate. Positions 174 and 197 each coordinate 3-dehydroquinate.

This sequence belongs to the type-I 3-dehydroquinase family. In terms of assembly, homodimer.

The catalysed reaction is 3-dehydroquinate = 3-dehydroshikimate + H2O. The protein operates within metabolic intermediate biosynthesis; chorismate biosynthesis; chorismate from D-erythrose 4-phosphate and phosphoenolpyruvate: step 3/7. Involved in the third step of the chorismate pathway, which leads to the biosynthesis of aromatic amino acids. Catalyzes the cis-dehydration of 3-dehydroquinate (DHQ) and introduces the first double bond of the aromatic ring to yield 3-dehydroshikimate. This Saccharolobus solfataricus (strain ATCC 35092 / DSM 1617 / JCM 11322 / P2) (Sulfolobus solfataricus) protein is 3-dehydroquinate dehydratase.